Reading from the N-terminus, the 269-residue chain is Diaminopimelate epimerase (269 aa).

Substrate contacts are provided by N13, Q47, and N65. Catalysis depends on C74, which acts as the Proton donor. Substrate-binding positions include 75–76, N149, N182, and 200–201; these read GN and ER. C209 (proton acceptor) is an active-site residue. Position 210–211 (210–211) interacts with substrate; it reads GT.

The protein belongs to the diaminopimelate epimerase family. As to quaternary structure, homodimer.

The protein resides in the cytoplasm. It carries out the reaction (2S,6S)-2,6-diaminopimelate = meso-2,6-diaminopimelate. It functions in the pathway amino-acid biosynthesis; L-lysine biosynthesis via DAP pathway; DL-2,6-diaminopimelate from LL-2,6-diaminopimelate: step 1/1. In terms of biological role, catalyzes the stereoinversion of LL-2,6-diaminopimelate (L,L-DAP) to meso-diaminopimelate (meso-DAP), a precursor of L-lysine and an essential component of the bacterial peptidoglycan. This Erythrobacter litoralis (strain HTCC2594) protein is Diaminopimelate epimerase.